A 441-amino-acid polypeptide reads, in one-letter code: GTPase Der (441 aa).

2 EngA-type G domains span residues 4–168 (PVVA…PEDI) and 177–352 (IRIA…EQNS). GTP-binding positions include 10–17 (GRPNVGKS), 57–61 (DTGGI), 121–124 (NKVE), 183–190 (GRPNVGKS), 230–234 (DTAGM), and 295–298 (NKWD). Positions 353-437 (TRVATATLNT…PIRMIVRQKD (85 aa)) constitute a KH-like domain.

This sequence belongs to the TRAFAC class TrmE-Era-EngA-EngB-Septin-like GTPase superfamily. EngA (Der) GTPase family. In terms of assembly, associates with the 50S ribosomal subunit.

In terms of biological role, GTPase that plays an essential role in the late steps of ribosome biogenesis. The chain is GTPase Der from Desulfitobacterium hafniense (strain DSM 10664 / DCB-2).